A 35-amino-acid polypeptide reads, in one-letter code: Potassium channel toxin (35 aa).

Intrachain disulfides connect cysteine 6–cysteine 25, cysteine 11–cysteine 30, and cysteine 15–cysteine 32.

It belongs to the short scorpion toxin superfamily. Potassium channel inhibitor family. Alpha-KTx 21 subfamily. As to expression, expressed by the venom gland.

Its subcellular location is the secreted. Toxin that blocks voltage-gated potassium channels (Kv). The protein is Potassium channel toxin of Tityus metuendus (Scorpion).